Here is a 178-residue protein sequence, read N- to C-terminus: Thymidine kinase (178 aa).

13–20 (GPMFAGKS) is an ATP binding site. The Proton acceptor role is filled by Glu-85. Phe-115 provides a ligand contact to substrate. The Zn(2+) site is built by Cys-140 and Cys-143. 159-163 (IEIIG) provides a ligand contact to substrate. Positions 172 and 175 each coordinate Zn(2+).

Belongs to the thymidine kinase family.

The catalysed reaction is thymidine + ATP = dTMP + ADP + H(+). The sequence is that of Thymidine kinase (TK) from Myxoma virus (strain Lausanne) (MYXV).